The following is a 138-amino-acid chain: Glia maturation factor (138 aa).

The region spanning 3 to 138 (DNQICDISNE…TEEWLKAKLK (136 aa)) is the ADF-H domain.

Belongs to the actin-binding proteins ADF family. GMF subfamily. In ovaries, expressed in follicular epithelium, in polar cells, migrating border cells, and centripedal cells (at protein level).

The protein resides in the cell projection. It is found in the lamellipodium. Its subcellular location is the cytoplasm. It localises to the perinuclear region. The protein localises to the nucleus. The protein resides in the cell cortex. In terms of biological role, inhibits Arp2/3-mediated actin nucleation. Together with flr, promotes Arp2/3-nucleated actin filament array disassembly. Promotes debranching. Regulates lamellipodial protrusion dynamics possibly by facilitating lamellipodial retraction. In egg chambers, enhances the retraction dynamics of cellular extensions in border cells and thus together with flr plays an important role in directional migration of border cell clusters. In Drosophila melanogaster (Fruit fly), this protein is Glia maturation factor.